Reading from the N-terminus, the 574-residue chain is ATP synthase subunit beta, mitochondrial (574 aa).

Residues 1-26 (MLSSVRLAALRAGKTNSVFQAVRAFA) constitute a mitochondrion transit peptide. Residue 183-190 (GGAGVGKT) coordinates ATP.

Belongs to the ATPase alpha/beta chains family. F-type ATPases have 2 components, CF(1) - the catalytic core - and CF(0) - the membrane proton channel. CF(1) has five subunits: alpha(3), beta(3), gamma(1), delta(1), epsilon(1). CF(0) has three main subunits: a, b and c.

The protein localises to the mitochondrion. It is found in the mitochondrion inner membrane. The enzyme catalyses ATP + H2O + 4 H(+)(in) = ADP + phosphate + 5 H(+)(out). Its function is as follows. Mitochondrial membrane ATP synthase (F(1)F(0) ATP synthase or Complex V) produces ATP from ADP in the presence of a proton gradient across the membrane which is generated by electron transport complexes of the respiratory chain. F-type ATPases consist of two structural domains, F(1) - containing the extramembraneous catalytic core, and F(0) - containing the membrane proton channel, linked together by a central stalk and a peripheral stalk. During catalysis, ATP synthesis in the catalytic domain of F(1) is coupled via a rotary mechanism of the central stalk subunits to proton translocation. Subunits alpha and beta form the catalytic core in F(1). Rotation of the central stalk against the surrounding alpha(3)beta(3) subunits leads to hydrolysis of ATP in three separate catalytic sites on the beta subunits. The sequence is that of ATP synthase subunit beta, mitochondrial (ATP2) from Chlamydomonas reinhardtii (Chlamydomonas smithii).